The sequence spans 367 residues: Biotin--protein ligase 1, chloroplastic (367 aa).

The transit peptide at 1–37 (MEAVRSTTTLSNFHLLNILVLRSLKPLHRLSFSFSAS) directs the protein to the chloroplast. The BPL/LPL catalytic domain maps to 105-289 (IITHRFGRFL…KFEKFFDLFM (185 aa)). Residues 122-124 (STH), Q145, 149-151 (RGR), and K220 contribute to the biotin site.

It belongs to the biotin--protein ligase family. Expressed in roots, leaves, stems, flowers, siliques and seeds.

The protein resides in the plastid. It is found in the chloroplast. It localises to the cytoplasm. The protein localises to the cytosol. The enzyme catalyses apo-[3-methylcrotonoyl-CoA:carbon-dioxide ligase (ADP-forming)] + biotin + ATP = holo-[3-methylcrotonoyl-CoA:carbon-dioxide ligase (ADP-forming)] + AMP + diphosphate + H(+). It catalyses the reaction biotin + L-lysyl-[protein] + ATP = N(6)-biotinyl-L-lysyl-[protein] + AMP + diphosphate + H(+). In terms of biological role, plays a major role in biotin-dependent carboxylase biotinylation. Catalyzes the addition of biotin to the biotin carboxyl carrier protein (BCCP) subunit of acetyl-CoA carboxylase. Can also biotinylate methylcrotonyl-CoA carboxylase. Is responsible for most, if not all, biotin--protein ligase activity in Arabidopsis. Is essential for plant viability and required for ovule development. In Arabidopsis thaliana (Mouse-ear cress), this protein is Biotin--protein ligase 1, chloroplastic.